Here is a 368-residue protein sequence, read N- to C-terminus: Microtubule-associated protein Jupiter (368 aa).

Phosphoserine is present on Ser30. Phosphothreonine is present on Thr41. A compositionally biased stretch (basic and acidic residues) spans 81–93; that stretch reads RRGQKSVDSHSRL. The segment at 81 to 106 is disordered; the sequence is RRGQKSVDSHSRLFGEPSRPITPGKN. Thr102 bears the Phosphothreonine mark. 3 positions are modified to phosphoserine: Ser111, Ser146, and Ser157. Composition is skewed to low complexity over residues 129-157 and 238-248; these read NGNTNSTTNGHYNGKSGSVSSASSSVSSS and GRYGYSSQSRR. Disordered stretches follow at residues 129 to 164, 196 to 256, and 316 to 368; these read NGNTNSTTNGHYNGKSGSVSSASSSVSSSTENLKIN, SQGN…SPLN, and KPKK…SGLW. The segment covering 337 to 354 has biased composition (polar residues); the sequence is GSDSAQTPTMNGANQVIN.

It belongs to the MAP Jupiter family.

Its subcellular location is the nucleus. The protein localises to the cytoplasm. It localises to the cytoskeleton. It is found in the spindle. Binds to all microtubule populations. In Drosophila willistoni (Fruit fly), this protein is Microtubule-associated protein Jupiter.